The sequence spans 460 residues: A-type ATP synthase subunit B (460 aa).

It belongs to the ATPase alpha/beta chains family. In terms of assembly, has multiple subunits, A(3), B(3), C, D, E, F, G, I and K(x); there may be a few other subunits as well.

The protein localises to the cell membrane. In terms of biological role, component of the A-type ATP synthase that produces ATP from ADP in the presence of a proton gradient across the membrane. The B chain is a regulatory subunit. In Methanosarcina mazei (strain ATCC BAA-159 / DSM 3647 / Goe1 / Go1 / JCM 11833 / OCM 88) (Methanosarcina frisia), this protein is A-type ATP synthase subunit B.